The sequence spans 256 residues: Proteasome subunit alpha-type 8 (256 aa).

It belongs to the peptidase T1A family. Component of the outer alpha-ring of the 20S proteasome core which is composed of 28 subunits that are arranged in four stacked rings, resulting in a barrel-shaped structure. The catalytic chamber with the active sites is on the inside of the barrel. Interacts with canonical subunits of the spermatoproteasome, including proteasome activators PSME4 (also called PA200) and PSME3 (also called PA28-gamma). Interacts with proteasome-interacting proteins chaperones, ubiquitin ligases and ubiquitin specific proteases. Interacts with meiotic proteins cyclin dependent kinase CDK1 and the ATPase TRIP13 as well as proteins of the synaptonemal complex SIX6OS1 and SYCE3.

It is found in the nucleus. Functionally, component of the spermatoproteasome, a proteasome specifically found in testis that promotes acetylation-dependent degradation of histones, thereby participating actively to the exchange of histones during spermatogenesis. The proteasome is a protein complex that degrades unneeded or damaged proteins by proteolysis, a chemical reaction that breaks peptide bonds. Required for 20S core proteasome assembly, essential for the degradation of meiotic proteins RAD51 and RPA1 at late prophase I and the progression of meiosis I during spermatogenesis. Localizes to the synaptonemal complex, a 'zipper'-like structure that holds homologous chromosome pairs in synapsis during meiotic prophase I. The sequence is that of Proteasome subunit alpha-type 8 (PSMA8) from Homo sapiens (Human).